The chain runs to 308 residues: MKHLLTLMEFKPHEVEDLLRISRDFKARYMAGEVYTPLFPGRIVMLYFEKPSTRTRLSLTAAAAQLGMQAVYTAPGELQIGRGETIADTMRVVSRYAAAVAARVYKHETLEEMARYSSIPVINALSDRHHPLQALADALTLWERSGRLHGLKVAFVGDVSNNVATSLAVVGAKLGWEVRLVGPKPLWNQKLVEELAEDLAKTGGQIYFTDSMNEVAGVDGVYTDVWVSMGFEKEAEERRRLLKPYQVNQRVMDIAGKRAVFLHCLPAHRGEEVTDEVIDGPQSAVWDQAENRMHTAKAVFAYLLNKRA.

Carbamoyl phosphate contacts are provided by residues 52-55, Gln79, Arg103, and 130-133; these read STRT and HPLQ. Residues Asn162, Asp224, and 228–229 each bind L-ornithine; that span reads SM. Carbamoyl phosphate-binding positions include 264–265 and Arg292; that span reads CL.

This sequence belongs to the aspartate/ornithine carbamoyltransferase superfamily. OTCase family.

The protein resides in the cytoplasm. The enzyme catalyses carbamoyl phosphate + L-ornithine = L-citrulline + phosphate + H(+). It participates in amino-acid biosynthesis; L-arginine biosynthesis; L-arginine from L-ornithine and carbamoyl phosphate: step 1/3. Its function is as follows. Reversibly catalyzes the transfer of the carbamoyl group from carbamoyl phosphate (CP) to the N(epsilon) atom of ornithine (ORN) to produce L-citrulline. The polypeptide is Ornithine carbamoyltransferase (Pyrobaculum calidifontis (strain DSM 21063 / JCM 11548 / VA1)).